The sequence spans 157 residues: Nicotinate dehydrogenase subunit A (157 aa).

The 2Fe-2S ferredoxin-type domain occupies 3–79 (TTISLQVNGQ…GRNITTLEGL (77 aa)). [2Fe-2S] cluster is bound by residues Cys41, Cys46, Cys49, and Cys61.

The cofactor is [2Fe-2S] cluster.

It carries out the reaction 2 Fe(III)-[cytochrome] + nicotinate + H2O = 2 Fe(II)-[cytochrome] + 6-hydroxynicotinate + 2 H(+). The protein operates within cofactor degradation; nicotinate degradation. In terms of biological role, subunit of the two-component enzyme NicAB that mediates nicotinate hydroxylation, the first step in the aerobic nicotinate degradation pathway. Mediates conversion of nicotinate into 6-hydroxynicotinate (6HNA). In Pseudomonas putida (strain ATCC 47054 / DSM 6125 / CFBP 8728 / NCIMB 11950 / KT2440), this protein is Nicotinate dehydrogenase subunit A (nicA).